A 327-amino-acid polypeptide reads, in one-letter code: Protein EMSY-LIKE 1 (327 aa).

The ENT domain maps to 1–88 (METQIHQLEQ…HATIQPFDVL (88 aa)). Residues 32 to 58 (ESLITELRKELRVSDDEHRELLSRVNK) are a coiled coil. 2 disordered regions span residues 206-257 (GHGS…SDDI) and 305-327 (ADTSDGEMDGDPPYSHDHPMPQG). Residues 214–232 (GNRRGQIHGGRGRGPRIHQ) are compositionally biased toward basic residues. Residues 281–306 (LELDKAKKMLKEHEQALIAAIARLAD) are a coiled coil. A Phosphoserine modification is found at Ser308. Basic and acidic residues predominate over residues 318 to 327 (YSHDHPMPQG).

Isoform 1 interacts with EDM2 in nucleus.

Its subcellular location is the nucleus. Functionally, probably involved in the regulation of chromatin states. Contributes to RPP7-mediated and basal immunity, especially against Hyaloperonospora arabidopsidis isolate Hiks1. Regulates negatively EDM2-dependent floral transition. The sequence is that of Protein EMSY-LIKE 1 from Arabidopsis thaliana (Mouse-ear cress).